The primary structure comprises 448 residues: MLEKVVIANRGEIALRILRACKELGIKTVAVHSTADRDLKHVLLADETICIGPAPSAKSYLNIPAIIAAAEVTGADAIHPGYGFLSENADFAEQVERSGFTFIGPTADVIRLMGDKVSAIKAMKKAGVPCVPGSDGPVSNDIAKNKEIAKRIGYPIIIKASGGGGGRGMRVVRSEDALEESIAMTKAEAKAAFNNDMVYMEKYLENPRHVEIQVLADTHGNAVYLAERDCSMQRRHQKVVEEAPAPGITEEVRRDIGSRCANACVEIGYRGAGTFEFLYENGEFYFIEMNTRIQVEHPVTEMITGVDLVKEQLRIAAGLPISFKQEDIKVKGHAMECRINAEDPKTFLPSPGKVNHLHSPGGLGVRWDSHVYGGYTVPPHYDSMIAKLITYGDTREVAIRRMQNALSETIIDGIKTNIPLHELILEDENFQKGGTNIHYLEKKLGMNE.

Positions Met-1–Gly-445 constitute a Biotin carboxylation domain. ATP-binding positions include Lys-116, Lys-159, Gly-165 to Gly-166, Glu-201 to Leu-204, His-209, and His-236. Positions Ile-120 to Ala-317 constitute an ATP-grasp domain. Lys-238 lines the hydrogencarbonate pocket. Residues Glu-276 and Glu-288 each coordinate ATP. Residues Glu-276, Glu-288, and Asn-290 each coordinate Mg(2+). Residues Glu-276, Glu-288, and Asn-290 each contribute to the Mn(2+) site. Residues Arg-292, Val-295, and Arg-338 each coordinate hydrogencarbonate. Arg-292 is an active-site residue. Residue Arg-338 participates in biotin binding.

As to quaternary structure, acetyl-CoA carboxylase is a heterohexamer of biotin carboxyl carrier protein, biotin carboxylase and the two subunits of carboxyl transferase in a 2:2 complex. The cofactor is Mg(2+). It depends on Mn(2+) as a cofactor.

The enzyme catalyses N(6)-biotinyl-L-lysyl-[protein] + hydrogencarbonate + ATP = N(6)-carboxybiotinyl-L-lysyl-[protein] + ADP + phosphate + H(+). Its pathway is lipid metabolism; malonyl-CoA biosynthesis; malonyl-CoA from acetyl-CoA: step 1/1. This protein is a component of the acetyl coenzyme A carboxylase complex; first, biotin carboxylase catalyzes the carboxylation of the carrier protein and then the transcarboxylase transfers the carboxyl group to form malonyl-CoA. In Haemophilus influenzae (strain ATCC 51907 / DSM 11121 / KW20 / Rd), this protein is Biotin carboxylase (accC).